Reading from the N-terminus, the 492-residue chain is Phenylalanine--tRNA ligase alpha subunit (492 aa).

L-phenylalanine is bound by residues T335, 374–376, and Y414; that span reads QLE. Mg(2+) is bound at residue E416. Residue F439 coordinates L-phenylalanine.

This sequence belongs to the class-II aminoacyl-tRNA synthetase family. Phe-tRNA synthetase alpha subunit type 2 subfamily. As to quaternary structure, tetramer of two alpha and two beta subunits. Requires Mg(2+) as cofactor.

Its subcellular location is the cytoplasm. The catalysed reaction is tRNA(Phe) + L-phenylalanine + ATP = L-phenylalanyl-tRNA(Phe) + AMP + diphosphate + H(+). The chain is Phenylalanine--tRNA ligase alpha subunit from Methanosarcina acetivorans (strain ATCC 35395 / DSM 2834 / JCM 12185 / C2A).